Here is an 89-residue protein sequence, read N- to C-terminus: Elongation factor 1-beta (89 aa).

Belongs to the EF-1-beta/EF-1-delta family.

In terms of biological role, promotes the exchange of GDP for GTP in EF-1-alpha/GDP, thus allowing the regeneration of EF-1-alpha/GTP that could then be used to form the ternary complex EF-1-alpha/GTP/AAtRNA. The sequence is that of Elongation factor 1-beta from Methanosarcina barkeri (strain Fusaro / DSM 804).